We begin with the raw amino-acid sequence, 448 residues long: 3-phosphoshikimate 1-carboxyvinyltransferase (448 aa).

The 3-phosphoshikimate site is built by K28, S29, and R33. K28 contacts phosphoenolpyruvate. 2 residues coordinate phosphoenolpyruvate: G100 and R128. 3-phosphoshikimate is bound by residues S173, Q175, D326, and K353. Q175 provides a ligand contact to phosphoenolpyruvate. D326 functions as the Proton acceptor in the catalytic mechanism. Phosphoenolpyruvate-binding residues include R357 and R405.

Belongs to the EPSP synthase family. As to quaternary structure, monomer.

Its subcellular location is the cytoplasm. The catalysed reaction is 3-phosphoshikimate + phosphoenolpyruvate = 5-O-(1-carboxyvinyl)-3-phosphoshikimate + phosphate. It participates in metabolic intermediate biosynthesis; chorismate biosynthesis; chorismate from D-erythrose 4-phosphate and phosphoenolpyruvate: step 6/7. Its function is as follows. Catalyzes the transfer of the enolpyruvyl moiety of phosphoenolpyruvate (PEP) to the 5-hydroxyl of shikimate-3-phosphate (S3P) to produce enolpyruvyl shikimate-3-phosphate and inorganic phosphate. In Sinorhizobium fredii (strain NBRC 101917 / NGR234), this protein is 3-phosphoshikimate 1-carboxyvinyltransferase.